The chain runs to 807 residues: Leucine--tRNA ligase (807 aa).

The short motif at 38–49 (PYPSGSGLHVGH) is the 'HIGH' region element. Positions 579 to 583 (KMSKS) match the 'KMSKS' region motif. Lys-582 is an ATP binding site.

This sequence belongs to the class-I aminoacyl-tRNA synthetase family.

It is found in the cytoplasm. The catalysed reaction is tRNA(Leu) + L-leucine + ATP = L-leucyl-tRNA(Leu) + AMP + diphosphate. This Mycoplasmopsis pulmonis (strain UAB CTIP) (Mycoplasma pulmonis) protein is Leucine--tRNA ligase.